A 340-amino-acid polypeptide reads, in one-letter code: Probable tRNA pseudouridine synthase B (340 aa).

The active-site Nucleophile is the aspartate 82. In terms of domain architecture, PUA spans 250-325; it reads LPKVWIKDSA…IAVDVEKVFM (76 aa).

The protein belongs to the pseudouridine synthase TruB family. Type 2 subfamily.

The enzyme catalyses uridine(55) in tRNA = pseudouridine(55) in tRNA. Functionally, could be responsible for synthesis of pseudouridine from uracil-55 in the psi GC loop of transfer RNAs. The polypeptide is Probable tRNA pseudouridine synthase B (Pyrococcus furiosus (strain ATCC 43587 / DSM 3638 / JCM 8422 / Vc1)).